The chain runs to 357 residues: MSAPTILIMAGGTGGHIMPGLAVAEVLRERGWRVLWLGNPDKMEGRLVPPRGIELVPLRFQGVRGRGAAALLKLPFLLARACAQAWRRLADIRPDVVLGMGGYVAFPGGVMAALRRTPLVVHEQNAVAGTANRWLARLARRVLSGFPGVLPRGEALGNPVRADLCALPEPAERYAGRSGALRVLVVGGSLGAHALNTTVPQALALLPEQARPQVVHQAGEQHLPALQQAYAQAGVQADCRAFIDDMADAMAQADLLICRAGAMTVSEVAAAGVAALFVPFPHAIDDHQTANARFLSDAQAAWLQPQASLTPQWLAQWLGQRTRQELQAVAGRARTHALPRAAAHIADVCEQAARRAS.

Residues 13–15 (TGG), Asn125, Arg161, Ser189, Ile243, and Gln288 contribute to the UDP-N-acetyl-alpha-D-glucosamine site.

The protein belongs to the glycosyltransferase 28 family. MurG subfamily.

Its subcellular location is the cell inner membrane. The enzyme catalyses di-trans,octa-cis-undecaprenyl diphospho-N-acetyl-alpha-D-muramoyl-L-alanyl-D-glutamyl-meso-2,6-diaminopimeloyl-D-alanyl-D-alanine + UDP-N-acetyl-alpha-D-glucosamine = di-trans,octa-cis-undecaprenyl diphospho-[N-acetyl-alpha-D-glucosaminyl-(1-&gt;4)]-N-acetyl-alpha-D-muramoyl-L-alanyl-D-glutamyl-meso-2,6-diaminopimeloyl-D-alanyl-D-alanine + UDP + H(+). The protein operates within cell wall biogenesis; peptidoglycan biosynthesis. In terms of biological role, cell wall formation. Catalyzes the transfer of a GlcNAc subunit on undecaprenyl-pyrophosphoryl-MurNAc-pentapeptide (lipid intermediate I) to form undecaprenyl-pyrophosphoryl-MurNAc-(pentapeptide)GlcNAc (lipid intermediate II). The polypeptide is UDP-N-acetylglucosamine--N-acetylmuramyl-(pentapeptide) pyrophosphoryl-undecaprenol N-acetylglucosamine transferase (Bordetella pertussis (strain Tohama I / ATCC BAA-589 / NCTC 13251)).